The sequence spans 130 residues: Spore coat protein M (130 aa).

Functionally, involved in spore outer coat assembly. May be part of a cross-linked insoluble skeleton that surrounds the spore, serves as a matrix for the assembly of additional outer coat material, and confers structural stability to the final structure. This Bacillus subtilis (strain 168) protein is Spore coat protein M (cotM).